Reading from the N-terminus, the 272-residue chain is Cell division protein FtsQ (272 aa).

Residues 1-43 (MEYNPPNTRERIAARRQRLRQPSSEPAIPGWRRRFIDGLQSGR) are Cytoplasmic-facing. The helical transmembrane segment at 44-64 (IVSGAVFVVSCLALFYVLFSS) threads the bilayer. Topologically, residues 65-272 (QFRVQTVEVV…FYQNRTDGRS (208 aa)) are extracellular. Residues 66-133 (FRVQTVEVVG…DRARIVIVER (68 aa)) enclose the POTRA domain.

It belongs to the FtsQ/DivIB family. FtsQ subfamily.

The protein localises to the cell membrane. Functionally, essential cell division protein. This Chloroflexus aggregans (strain MD-66 / DSM 9485) protein is Cell division protein FtsQ.